A 183-amino-acid polypeptide reads, in one-letter code: Large ribosomal subunit protein uL18 (183 aa).

The protein belongs to the universal ribosomal protein uL18 family. As to quaternary structure, part of the 50S ribosomal subunit. Contacts the 5S and 23S rRNAs.

This is one of the proteins that bind and probably mediate the attachment of the 5S RNA into the large ribosomal subunit, where it forms part of the central protuberance. This Halobacterium salinarum (strain ATCC 29341 / DSM 671 / R1) protein is Large ribosomal subunit protein uL18.